The chain runs to 197 residues: Imidazoleglycerol-phosphate dehydratase (197 aa).

Belongs to the imidazoleglycerol-phosphate dehydratase family.

It is found in the cytoplasm. It catalyses the reaction D-erythro-1-(imidazol-4-yl)glycerol 3-phosphate = 3-(imidazol-4-yl)-2-oxopropyl phosphate + H2O. The protein operates within amino-acid biosynthesis; L-histidine biosynthesis; L-histidine from 5-phospho-alpha-D-ribose 1-diphosphate: step 6/9. The sequence is that of Imidazoleglycerol-phosphate dehydratase from Pseudomonas syringae pv. syringae (strain B728a).